We begin with the raw amino-acid sequence, 542 residues long: CTP synthase (542 aa).

The segment at 1–265 is amidoligase domain; it reads MARYVFITGG…DSEVLAAFGI (265 aa). Serine 13 lines the CTP pocket. UTP is bound at residue serine 13. ATP is bound by residues 14–19 and aspartate 71; that span reads SLGKGI. Mg(2+)-binding residues include aspartate 71 and glutamate 139. CTP contacts are provided by residues 146 to 148, 186 to 191, and lysine 222; these read DIE and KTKPTQ. Residues 186-191 and lysine 222 contribute to the UTP site; that span reads KTKPTQ. Positions 291–541 constitute a Glutamine amidotransferase type-1 domain; it reads TIAIVGKYTG…VEAAVEQSRL (251 aa). Residue glycine 353 coordinates L-glutamine. The active-site Nucleophile; for glutamine hydrolysis is the cysteine 380. Residues 381 to 384, glutamate 404, and arginine 469 each bind L-glutamine; that span reads FGMQ. Active-site residues include histidine 514 and glutamate 516.

It belongs to the CTP synthase family. As to quaternary structure, homotetramer.

It carries out the reaction UTP + L-glutamine + ATP + H2O = CTP + L-glutamate + ADP + phosphate + 2 H(+). The catalysed reaction is L-glutamine + H2O = L-glutamate + NH4(+). The enzyme catalyses UTP + NH4(+) + ATP = CTP + ADP + phosphate + 2 H(+). Its pathway is pyrimidine metabolism; CTP biosynthesis via de novo pathway; CTP from UDP: step 2/2. With respect to regulation, allosterically activated by GTP, when glutamine is the substrate; GTP has no effect on the reaction when ammonia is the substrate. The allosteric effector GTP functions by stabilizing the protein conformation that binds the tetrahedral intermediate(s) formed during glutamine hydrolysis. Inhibited by the product CTP, via allosteric rather than competitive inhibition. In terms of biological role, catalyzes the ATP-dependent amination of UTP to CTP with either L-glutamine or ammonia as the source of nitrogen. Regulates intracellular CTP levels through interactions with the four ribonucleotide triphosphates. This chain is CTP synthase, found in Agrobacterium fabrum (strain C58 / ATCC 33970) (Agrobacterium tumefaciens (strain C58)).